The sequence spans 180 residues: Oligoribonuclease (180 aa).

The Exonuclease domain maps to 7-170; it reads LIWIDLEMTG…DDIRESIAEL (164 aa). Residue tyrosine 128 is part of the active site.

Belongs to the oligoribonuclease family.

The protein resides in the cytoplasm. 3'-to-5' exoribonuclease specific for small oligoribonucleotides. The sequence is that of Oligoribonuclease from Pseudomonas fluorescens (strain ATCC BAA-477 / NRRL B-23932 / Pf-5).